We begin with the raw amino-acid sequence, 98 residues long: Small ribosomal subunit protein bTHXm (98 aa).

The transit peptide at 1-35 (MAAMQWCGAMTRRIMMTQRTSAALNCSARYSSLSP) directs the protein to the mitochondrion. The tract at residues 52 to 71 (DKKTKKGKRFKGSYGNSRGK) is disordered. The segment covering 53–62 (KKTKKGKRFK) has biased composition (basic residues).

The protein belongs to the bacterial ribosomal protein bTHX family. In terms of assembly, component of the mitochondrial ribosome small subunit.

The protein localises to the mitochondrion. This Arabidopsis thaliana (Mouse-ear cress) protein is Small ribosomal subunit protein bTHXm.